The following is a 1399-amino-acid chain: Meiosis-specific protein ASY2 (1399 aa).

In terms of domain architecture, HORMA spans Gln-10–Val-248. Residues Pro-257–Gln-266 are compositionally biased toward acidic residues. Disordered regions lie at residues Pro-257 to Gln-281, Ser-487 to Pro-525, Arg-617 to Glu-656, Pro-940 to Val-974, and Asp-1045 to Lys-1090. A compositionally biased stretch (basic and acidic residues) spans Asp-267 to Gln-281. The segment covering Ser-509–Ser-523 has biased composition (pro residues). Residues Arg-617–Ser-631 show a composition bias toward polar residues. Residues Met-1205 to Ala-1246 are a coiled coil.

Its subcellular location is the chromosome. It is found in the nucleus. In terms of biological role, required for normal meiosis. In Arabidopsis thaliana (Mouse-ear cress), this protein is Meiosis-specific protein ASY2.